Here is a 175-residue protein sequence, read N- to C-terminus: Large ribosomal subunit protein uL10 (175 aa).

It belongs to the universal ribosomal protein uL10 family. In terms of assembly, part of the ribosomal stalk of the 50S ribosomal subunit. The N-terminus interacts with L11 and the large rRNA to form the base of the stalk. The C-terminus forms an elongated spine to which L12 dimers bind in a sequential fashion forming a multimeric L10(L12)X complex.

Forms part of the ribosomal stalk, playing a central role in the interaction of the ribosome with GTP-bound translation factors. The chain is Large ribosomal subunit protein uL10 from Pelotomaculum thermopropionicum (strain DSM 13744 / JCM 10971 / SI).